A 777-amino-acid polypeptide reads, in one-letter code: Endonuclease MutS2 (777 aa).

328-335 (GPNTGGKT) serves as a coordination point for ATP. The Smr domain maps to 702–777 (LDIRGMNTLE…GDGATEVYLK (76 aa)).

This sequence belongs to the DNA mismatch repair MutS family. MutS2 subfamily. Homodimer. Binds to stalled ribosomes, contacting rRNA.

Its function is as follows. Endonuclease that is involved in the suppression of homologous recombination and thus may have a key role in the control of bacterial genetic diversity. Functionally, acts as a ribosome collision sensor, splitting the ribosome into its 2 subunits. Detects stalled/collided 70S ribosomes which it binds and splits by an ATP-hydrolysis driven conformational change. Acts upstream of the ribosome quality control system (RQC), a ribosome-associated complex that mediates the extraction of incompletely synthesized nascent chains from stalled ribosomes and their subsequent degradation. Probably generates substrates for RQC. In Carboxydothermus hydrogenoformans (strain ATCC BAA-161 / DSM 6008 / Z-2901), this protein is Endonuclease MutS2.